Reading from the N-terminus, the 110-residue chain is Small ribosomal subunit protein eS25 (110 aa).

The interval 1–37 is disordered; it reads MGGASKKPISTMEKRLKKEAEKQQKAEEKKKGPSKTG. Residues 12–37 are compositionally biased toward basic and acidic residues; that stretch reads MEKRLKKEAEKQQKAEEKKKGPSKTG.

This sequence belongs to the eukaryotic ribosomal protein eS25 family.

The sequence is that of Small ribosomal subunit protein eS25 (rps25e) from Saccharolobus solfataricus (strain ATCC 35092 / DSM 1617 / JCM 11322 / P2) (Sulfolobus solfataricus).